A 310-amino-acid chain; its full sequence is Ribosomal RNA large subunit methyltransferase F (310 aa).

The protein belongs to the methyltransferase superfamily. METTL16/RlmF family.

It localises to the cytoplasm. It carries out the reaction adenosine(1618) in 23S rRNA + S-adenosyl-L-methionine = N(6)-methyladenosine(1618) in 23S rRNA + S-adenosyl-L-homocysteine + H(+). In terms of biological role, specifically methylates the adenine in position 1618 of 23S rRNA. The polypeptide is Ribosomal RNA large subunit methyltransferase F (Pseudoalteromonas translucida (strain TAC 125)).